Consider the following 64-residue polypeptide: Large ribosomal subunit protein bL35 (64 aa).

Over residues 38–53 the composition is skewed to basic residues; it reads KRKANLNAPKHVHHTN. The tract at residues 38-64 is disordered; that stretch reads KRKANLNAPKHVHHTNAHSVMSLLCRA.

It belongs to the bacterial ribosomal protein bL35 family.

The polypeptide is Large ribosomal subunit protein bL35 (Helicobacter pylori (strain G27)).